The sequence spans 104 residues: MKLTTTFLVLCVALLSDSGVAFFMDSLAKPAVEPVAALAPAAEAVAGAVPSLPLSHLAILRFILASMGIPLDPLIEGSRKCVTELGPEAVGAVKSLLGVLTMFG.

A signal peptide spans 1–21; it reads MKLTTTFLVLCVALLSDSGVA.

The protein belongs to the secretoglobin family. UGRP subfamily. Homodimer; disulfide-linked. In terms of tissue distribution, highly expressed in lung, where it localizes to epithelial cells lining the trachea and bronchi. Expression in lung is mainly restricted to bronchi, submucosal glands of the trachea, and tracheal epithelium, with little expression in terminal bronchioles. Expressed in uterus where it localizes to epithelial cells of the uterine glands. Also detected in heart, stomach and small intestine.

Its subcellular location is the secreted. In terms of biological role, secreted cytokine-like protein. Inhibits cell growth in vitro. This chain is Secretoglobin family 3A member 1 (Scgb3a1), found in Mus musculus (Mouse).